Reading from the N-terminus, the 348-residue chain is Fe-S cluster assembly protein DRE2 (348 aa).

The N-terminal SAM-like domain stretch occupies residues 1–162 (MSQYKTGLLL…KKASSSTSNL (162 aa)). The disordered stretch occupies residues 137 to 170 (KTNNTKLQSGSKLPTFKKASSSTSNLPSFKKADH). Residues 144 to 163 (QSGSKLPTFKKASSSTSNLP) are compositionally biased toward polar residues. Positions 163–242 (PSFKKADHSR…EEELIDEDGS (80 aa)) are linker. Serine 206 is modified (phosphoserine). Positions 252, 263, 266, and 268 each coordinate [2Fe-2S] cluster. The tract at residues 252 to 268 (CGKSKTKKKKACKDCTC) is fe-S binding site A. Residues cysteine 311, cysteine 314, cysteine 322, and cysteine 325 each contribute to the [4Fe-4S] cluster site. 2 short sequence motifs (cx2C motif) span residues 311–314 (CGSC) and 322–325 (CSGC). Residues 311–325 (CGSCSLGDAFRCSGC) are fe-S binding site B.

This sequence belongs to the anamorsin family. As to quaternary structure, monomer. Interacts with TAH18. Interacts with MIA40. [2Fe-2S] cluster is required as a cofactor. Requires [4Fe-4S] cluster as cofactor.

Its subcellular location is the cytoplasm. The protein resides in the mitochondrion intermembrane space. In terms of biological role, component of the cytosolic iron-sulfur (Fe-S) protein assembly (CIA) machinery required for the maturation of extramitochondrial Fe-S proteins. Part of an electron transfer chain functioning in an early step of cytosolic Fe-S biogenesis, facilitating the de novo assembly of a [4Fe-4S] cluster on the scaffold complex CFD1-NBP35. Electrons are transferred to DRE2 from NADPH via the FAD- and FMN-containing protein TAH18. TAH18-DRE2 are also required for the assembly of the diferric tyrosyl radical cofactor of ribonucleotide reductase (RNR), probably by providing electrons for reduction during radical cofactor maturation in the catalytic small subunit RNR2. The sequence is that of Fe-S cluster assembly protein DRE2 from Saccharomyces cerevisiae (strain Lalvin EC1118 / Prise de mousse) (Baker's yeast).